The chain runs to 227 residues: Sperm-associated antigen 7 (227 aa).

The interval 1–45 (MADLLGSILSSMEKPPSLGDQESRRKAREQAARLKKLQEQDKQQK) is disordered. Alanine 2 is modified (N-acetylalanine). A compositionally biased stretch (basic and acidic residues) spans 21 to 45 (QESRRKAREQAARLKKLQEQDKQQK). The Nuclear localization signal signature appears at 35 to 51 (KKLQEQDKQQKVEFRKR). An R3H domain is found at 46–109 (VEFRKRMEKE…DCRYVMIFKK (64 aa)). Phosphoserine is present on serine 114. Residues 118 to 161 (LDSYRHGEEWDPQKAEEKRKLKELAQKQEEEAAQQGPAVVSPAS) are disordered. Residues 119-147 (DSYRHGEEWDPQKAEEKRKLKELAQKQEE) show a composition bias toward basic and acidic residues. The short motif at 122–139 (RHGEEWDPQKAEEKRKLK) is the Nuclear localization signal element. Serine 158 and serine 202 each carry phosphoserine.

The protein localises to the nucleus. The sequence is that of Sperm-associated antigen 7 (Spag7) from Mus musculus (Mouse).